Here is an 854-residue protein sequence, read N- to C-terminus: Glucans biosynthesis glucosyltransferase H (854 aa).

7 consecutive transmembrane segments (helical) span residues 155 to 175 (ILLA…KTIL), 209 to 229 (ILVL…TALM), 528 to 548 (VFLT…FLVL), 583 to 603 (IALF…SVIL), 619 to 639 (FLSL…RMLF), 671 to 691 (FVRH…MAWL), and 695 to 715 (FLWW…VSVY).

This sequence belongs to the glycosyltransferase 2 family. OpgH subfamily.

It is found in the cell inner membrane. The protein operates within glycan metabolism; osmoregulated periplasmic glucan (OPG) biosynthesis. Its function is as follows. Involved in the biosynthesis of osmoregulated periplasmic glucans (OPGs). This chain is Glucans biosynthesis glucosyltransferase H, found in Pectobacterium atrosepticum (strain SCRI 1043 / ATCC BAA-672) (Erwinia carotovora subsp. atroseptica).